The following is a 541-amino-acid chain: Putative ammonium transporter sll0537 (541 aa).

The next 11 helical transmembrane spans lie at 6–26 (TLWL…FMCL), 44–64 (FADF…IMFG), 86–106 (LAVF…IISG), 117–137 (YLLV…DWAW), 161–181 (FAGS…TILV), 203–223 (MPFS…FNGG), 235–255 (IMVN…LISL), 260–280 (MIQV…ITAS), 283–303 (VVMT…AYLV), 316–336 (VDAV…VGLF), and 356–376 (LLGI…FLTL).

Belongs to the ammonia transporter channel (TC 1.A.11.2) family.

The protein localises to the cell membrane. The polypeptide is Putative ammonium transporter sll0537 (Synechocystis sp. (strain ATCC 27184 / PCC 6803 / Kazusa)).